A 344-amino-acid polypeptide reads, in one-letter code: Sulfate/thiosulfate import ATP-binding protein CysA (344 aa).

An ABC transporter domain is found at 3 to 237 (IEVRNLVKKF…PATAFVHGFI (235 aa)). 35–42 (GPSGSGKT) provides a ligand contact to ATP.

The protein belongs to the ABC transporter superfamily. Sulfate/tungstate importer (TC 3.A.1.6) family. The complex is composed of two ATP-binding proteins (CysA), two transmembrane proteins (CysT and CysW) and a solute-binding protein (CysP).

It is found in the cell inner membrane. The enzyme catalyses sulfate(out) + ATP + H2O = sulfate(in) + ADP + phosphate + H(+). It catalyses the reaction thiosulfate(out) + ATP + H2O = thiosulfate(in) + ADP + phosphate + H(+). Functionally, part of the ABC transporter complex CysAWTP involved in sulfate/thiosulfate import. Responsible for energy coupling to the transport system. This chain is Sulfate/thiosulfate import ATP-binding protein CysA, found in Bradyrhizobium diazoefficiens (strain JCM 10833 / BCRC 13528 / IAM 13628 / NBRC 14792 / USDA 110).